The sequence spans 412 residues: Lysosomal phospholipase A and acyltransferase (412 aa).

The first 33 residues, 1–33, serve as a signal peptide directing secretion; sequence MGLHLRPYRVGLLPDGLLFLLLLLMLLADPALP. Aspartate 46 lines the substrate pocket. Cysteine 65 and cysteine 89 form a disulfide bridge. Asparagine 99 carries N-linked (GlcNAc...) asparagine glycosylation. Residue serine 198 is the Acyl-ester intermediate of the active site. Residue serine 198 coordinates Zn(2+). Methionine 199 is a substrate binding site. Residues asparagine 273 and asparagine 289 are each glycosylated (N-linked (GlcNAc...) asparagine). Zn(2+) contacts are provided by aspartate 340 and cysteine 355. Catalysis depends on charge relay system residues aspartate 360 and histidine 392. Histidine 392 contributes to the Zn(2+) binding site. A glycan (N-linked (GlcNAc...) asparagine) is linked at asparagine 398.

Belongs to the AB hydrolase superfamily. Lipase family. In terms of processing, N-glycosylated. N-glycosylation is important for maturation of the enzyme and normal subcellular location. In terms of tissue distribution, detected in blood plasma (at protein level). Ubiquitous. Highly expressed in heart, placenta, skeletal muscle, kidney and pancreas. Detected at lower levels in spleen, thymus, prostate, testis, ovary, small intestine, colon and peripheral blood leukocytes.

Its subcellular location is the lysosome. The protein resides in the secreted. The protein localises to the membrane. It catalyses the reaction a 1,2-diacyl-sn-glycero-3-phosphocholine + H2O = a 2-acyl-sn-glycero-3-phosphocholine + a fatty acid + H(+). It carries out the reaction 1-hexadecanoyl-2-(9Z-octadecenoyl)-sn-glycero-3-phosphocholine + H2O = 2-(9Z-octadecenoyl)-sn-glycero-3-phosphocholine + hexadecanoate + H(+). The enzyme catalyses 1-hexadecanoyl-2-glutaroyl-sn-glycero-3-phosphocholine + H2O = 2-glutaroyl-sn-glycero-3-phosphocholine + hexadecanoate + H(+). The catalysed reaction is 1-hexadecanoyl-2-nonadioyl-sn-glycero-3-phosphocholine + H2O = 2-nonadioyl-sn-glycero-3-phosphocholine + hexadecanoate + H(+). It catalyses the reaction 1-hexadecanoyl-2-(5-oxopentanoyl)-sn-glycero-3-phosphocholine + H2O = 2-(5-oxopentanoyl)-sn-glycero-3-phosphocholine + hexadecanoate + H(+). It carries out the reaction 1-hexadecanoyl-2-(9-oxononanoyl)-sn-glycero-3-phosphocholine + H2O = 2-(9-oxononanoyl)-sn-glycero-3-phosphocholine + hexadecanoate + H(+). The enzyme catalyses 1,2-dihexadecanoyl-sn-glycero-3-phosphocholine + H2O = 2-hexadecanoyl-sn-glycero-3-phosphocholine + hexadecanoate + H(+). The catalysed reaction is a 1,2-diacyl-sn-glycero-3-phosphocholine + H2O = a 1-acyl-sn-glycero-3-phosphocholine + a fatty acid + H(+). It catalyses the reaction 1,2-di-(9Z-octadecenoyl)-sn-glycero-3-phosphocholine + H2O = 1-(9Z-octadecenoyl)-sn-glycero-3-phosphocholine + (9Z)-octadecenoate + H(+). It carries out the reaction 1-hexadecanoyl-2-(9Z-octadecenoyl)-sn-glycero-3-phosphocholine + H2O = 1-hexadecanoyl-sn-glycero-3-phosphocholine + (9Z)-octadecenoate + H(+). The enzyme catalyses 1,2-dihexadecanoyl-sn-glycero-3-phosphocholine + H2O = 1-hexadecanoyl-sn-glycero-3-phosphocholine + hexadecanoate + H(+). The catalysed reaction is a 1-acyl-sn-glycero-3-phosphocholine + H2O = sn-glycerol 3-phosphocholine + a fatty acid + H(+). It catalyses the reaction 1-hexadecanoyl-sn-glycero-3-phosphocholine + H2O = sn-glycerol 3-phosphocholine + hexadecanoate + H(+). It carries out the reaction N-(acetyl)-sphing-4-enine + a 1,2-diacyl-sn-glycero-3-phosphoethanolamine = 1-O-acyl-N-(acetyl)-sphing-4-enine + a 2-acyl-sn-glycero-3-phosphoethanolamine. The enzyme catalyses 1-hexadecanoyl-2-(9Z-octadecenoyl)-sn-glycero-3-phosphoethanolamine + N-(acetyl)-sphing-4-enine = 2-(9Z-octadecenoyl)-sn-glycero-3-phosphoethanolamine + 1-hexadecanoyl-N-(acetyl)-sphing-4-enine. The catalysed reaction is 1-hexadecanoyl-2-(9Z,12Z-octadecadienoyl)-sn-glycero-3-phosphoethanolamine + N-(acetyl)-sphing-4-enine = 2-(9Z,12Z)-octadecadienoyl-sn-glycero-3-phosphoethanolamine + 1-hexadecanoyl-N-(acetyl)-sphing-4-enine. It catalyses the reaction 1-hexadecanoyl-2-(5Z,8Z,11Z,14Z-eicosatetraenoyl)-sn-glycero-3-phosphoethanolamine + N-(acetyl)-sphing-4-enine = 2-(5Z,8Z,11Z,14Z)-eicosatetraenoyl-sn-glycero-3-phosphoethanolamine + 1-hexadecanoyl-N-(acetyl)-sphing-4-enine. It carries out the reaction N-(acetyl)-sphing-4-enine + a 1,2-diacyl-sn-glycero-3-phosphoethanolamine = 1-O-acyl-N-(acetyl)-sphing-4-enine + a 1-acyl-sn-glycero-3-phosphoethanolamine. The enzyme catalyses 1-hexadecanoyl-2-(9Z-octadecenoyl)-sn-glycero-3-phosphoethanolamine + N-(acetyl)-sphing-4-enine = 1-(9Z-octadecenoyl)-N-(acetyl)-sphing-4-enine + 1-hexadecanoyl-sn-glycero-3-phosphoethanolamine. The catalysed reaction is 1-hexadecanoyl-2-(9Z,12Z-octadecadienoyl)-sn-glycero-3-phosphoethanolamine + N-(acetyl)-sphing-4-enine = 1-(9Z,12Z-octadecadienoyl)-N-acetylsphing-4-enine + 1-hexadecanoyl-sn-glycero-3-phosphoethanolamine. It catalyses the reaction 1-hexadecanoyl-2-(5Z,8Z,11Z,14Z-eicosatetraenoyl)-sn-glycero-3-phosphoethanolamine + N-(acetyl)-sphing-4-enine = 1-(5Z,8Z,11Z,14Z)-eicosatetraenoyl-N-(acetyl)-sphing-4-enine + 1-hexadecanoyl-sn-glycero-3-phosphoethanolamine. It carries out the reaction N-(acetyl)-sphing-4-enine + a 1,2-diacyl-sn-glycero-3-phosphocholine = 1-O-acyl-N-(acetyl)-sphing-4-enine + a 1-acyl-sn-glycero-3-phosphocholine. The enzyme catalyses 1-hexadecanoyl-2-(9Z-octadecenoyl)-sn-glycero-3-phosphocholine + N-(acetyl)-sphing-4-enine = 1-(9Z-octadecenoyl)-N-(acetyl)-sphing-4-enine + 1-hexadecanoyl-sn-glycero-3-phosphocholine. The catalysed reaction is 1-hexadecanoyl-2-(9Z,12Z-octadecadienoyl)-sn-glycero-3-phosphocholine + N-(acetyl)-sphing-4-enine = 1-(9Z,12Z-octadecadienoyl)-N-acetylsphing-4-enine + 1-hexadecanoyl-sn-glycero-3-phosphocholine. It catalyses the reaction 1-hexadecanoyl-2-(5Z,8Z,11Z,14Z-eicosatetraenoyl)-sn-glycero-3-phosphocholine + N-(acetyl)-sphing-4-enine = 1-(5Z,8Z,11Z,14Z)-eicosatetraenoyl-N-(acetyl)-sphing-4-enine + 1-hexadecanoyl-sn-glycero-3-phosphocholine. It carries out the reaction 1-hexadecanoyl-2-(4Z,7Z,10Z,13Z,16Z,19Z-docosahexaenoyl)-sn-glycero-3-phosphocholine + N-(acetyl)-sphing-4-enine = 1-(4Z,7Z,10Z,13Z,16Z,19Z-docosahexaenoyl)-N-(acetyl)-sphing-4-enine + 1-hexadecanoyl-sn-glycero-3-phosphocholine. The enzyme catalyses 1-octadecanoyl-2-(9Z-octadecenoyl)-sn-glycero-3-phosphocholine + N-(acetyl)-sphing-4-enine = 1-(9Z-octadecenoyl)-N-(acetyl)-sphing-4-enine + 1-octadecanoyl-sn-glycero-3-phosphocholine. The catalysed reaction is 1-octadecanoyl-2-(9Z,12Z)-octadecadienoyl-sn-glycero-3-phosphocholine + N-(acetyl)-sphing-4-enine = 1-(9Z,12Z-octadecadienoyl)-N-acetylsphing-4-enine + 1-octadecanoyl-sn-glycero-3-phosphocholine. It catalyses the reaction 1-octadecanoyl-2-(5Z,8Z,11Z,14Z-eicosatetraenoyl)-sn-glycero-3-phosphocholine + N-(acetyl)-sphing-4-enine = 1-(5Z,8Z,11Z,14Z)-eicosatetraenoyl-N-(acetyl)-sphing-4-enine + 1-octadecanoyl-sn-glycero-3-phosphocholine. It carries out the reaction 1-(9Z-octadecenoyl)-2-hexadecanoyl-sn-glycero-3-phosphocholine + N-(acetyl)-sphing-4-enine = 1-hexadecanoyl-N-(acetyl)-sphing-4-enine + 1-(9Z-octadecenoyl)-sn-glycero-3-phosphocholine. The enzyme catalyses 1-(9Z)-octadecenoyl-2-octadecanoyl-sn-glycero-3-phosphocholine + N-(acetyl)-sphing-4-enine = 1-octadecanoyl-N-(acetyl)-sphing-4-enine + 1-(9Z-octadecenoyl)-sn-glycero-3-phosphocholine. The catalysed reaction is 1,2-di-(9Z-octadecenoyl)-sn-glycero-3-phosphocholine + N-(acetyl)-sphing-4-enine = 1-(9Z-octadecenoyl)-N-(acetyl)-sphing-4-enine + 1-(9Z-octadecenoyl)-sn-glycero-3-phosphocholine. It catalyses the reaction N-(acetyl)-sphing-4-enine + a 1,2-diacyl-sn-glycero-3-phosphocholine = 1-O-acyl-N-(acetyl)-sphing-4-enine + a 2-acyl-sn-glycero-3-phosphocholine. It carries out the reaction 1-hexadecanoyl-2-(9Z-octadecenoyl)-sn-glycero-3-phosphocholine + N-(acetyl)-sphing-4-enine = 1-hexadecanoyl-N-(acetyl)-sphing-4-enine + 2-(9Z-octadecenoyl)-sn-glycero-3-phosphocholine. The enzyme catalyses 1-hexadecanoyl-2-(9Z,12Z-octadecadienoyl)-sn-glycero-3-phosphocholine + N-(acetyl)-sphing-4-enine = 2-(9Z,12Z-octadecadienoyl)-sn-glycero-3-phosphocholine + 1-hexadecanoyl-N-(acetyl)-sphing-4-enine. The catalysed reaction is 1-hexadecanoyl-2-(5Z,8Z,11Z,14Z-eicosatetraenoyl)-sn-glycero-3-phosphocholine + N-(acetyl)-sphing-4-enine = 1-hexadecanoyl-N-(acetyl)-sphing-4-enine + 2-(5Z,8Z,11Z,14Z)-eicosatetraenoyl-sn-glycero-3-phosphocholine. It catalyses the reaction 1-hexadecanoyl-2-(4Z,7Z,10Z,13Z,16Z,19Z-docosahexaenoyl)-sn-glycero-3-phosphocholine + N-(acetyl)-sphing-4-enine = 2-(4Z,7Z,10Z,13Z,16Z,19Z-docosahexaenoyl)-sn-glycero-3-phosphocholine + 1-hexadecanoyl-N-(acetyl)-sphing-4-enine. It carries out the reaction 1-hexadecanoyl-2-nonadioyl-sn-glycero-3-phosphocholine + N-(acetyl)-sphing-4-enine = 2-nonadioyl-sn-glycero-3-phosphocholine + 1-hexadecanoyl-N-(acetyl)-sphing-4-enine. The enzyme catalyses 1-octadecanoyl-2-(9Z-octadecenoyl)-sn-glycero-3-phosphocholine + N-(acetyl)-sphing-4-enine = 1-octadecanoyl-N-(acetyl)-sphing-4-enine + 2-(9Z-octadecenoyl)-sn-glycero-3-phosphocholine. The catalysed reaction is 1-octadecanoyl-2-(5Z,8Z,11Z,14Z-eicosatetraenoyl)-sn-glycero-3-phosphocholine + N-(acetyl)-sphing-4-enine = 1-octadecanoyl-N-(acetyl)-sphing-4-enine + 2-(5Z,8Z,11Z,14Z)-eicosatetraenoyl-sn-glycero-3-phosphocholine. It catalyses the reaction 1-(9Z-octadecenoyl)-2-hexadecanoyl-sn-glycero-3-phosphocholine + N-(acetyl)-sphing-4-enine = 1-(9Z-octadecenoyl)-N-(acetyl)-sphing-4-enine + 2-hexadecanoyl-sn-glycero-3-phosphocholine. It carries out the reaction 1-(9Z)-octadecenoyl-2-octadecanoyl-sn-glycero-3-phosphocholine + N-(acetyl)-sphing-4-enine = 2-octadecanoyl-sn-glycero-3-phosphocholine + 1-(9Z-octadecenoyl)-N-(acetyl)-sphing-4-enine. The enzyme catalyses a 1,2-diacyl-sn-glycero-3-phospho-L-serine + N-(acetyl)-sphing-4-enine = a 2-acyl-sn-glycero-3-phospho-L-serine + 1-O-acyl-N-(acetyl)-sphing-4-enine. The catalysed reaction is 1-octadecanoyl-2-(9Z-octadecenoyl)-sn-glycero-3-phospho-L-serine + N-(acetyl)-sphing-4-enine = 2-(9Z-octadecenoyl)-sn-glycero-3-phospho-L-serine + 1-octadecanoyl-N-(acetyl)-sphing-4-enine. It catalyses the reaction a 1,2-diacyl-sn-glycero-3-phospho-L-serine + N-(acetyl)-sphing-4-enine = 1-O-acyl-N-(acetyl)-sphing-4-enine + a 1-acyl-sn-glycero-3-phospho-L-serine. It carries out the reaction 1-octadecanoyl-2-(9Z-octadecenoyl)-sn-glycero-3-phospho-L-serine + N-(acetyl)-sphing-4-enine = 1-octadecanoyl-sn-glycero-3-phosphoserine + 1-(9Z-octadecenoyl)-N-(acetyl)-sphing-4-enine. The enzyme catalyses a 1,2-diacyl-sn-glycero-3-phospho-(1'-sn-glycerol) + N-(acetyl)-sphing-4-enine = 2-acyl-sn-glycero-3-phospho-(1'-sn-glycerol) + 1-O-acyl-N-(acetyl)-sphing-4-enine. The catalysed reaction is 1-octadecanoyl-2-(9Z-octadecenoyl)-sn-glycero-3-phospho-(1'-sn-glycerol) + N-(acetyl)-sphing-4-enine = 2-(9Z-octadecenoyl)-sn-glycero-3-phospho-(1'-sn-glycerol) + 1-octadecanoyl-N-(acetyl)-sphing-4-enine. It catalyses the reaction a 1,2-diacyl-sn-glycero-3-phospho-(1'-sn-glycerol) + N-(acetyl)-sphing-4-enine = 1-O-acyl-N-(acetyl)-sphing-4-enine + 1-acyl-sn-glycero-3-phospho-(1'-sn-glycerol). It carries out the reaction 1-octadecanoyl-2-(9Z-octadecenoyl)-sn-glycero-3-phospho-(1'-sn-glycerol) + N-(acetyl)-sphing-4-enine = 1-octadecanoyl-sn-glycero-3-phospho-(1'-sn-glycerol) + 1-(9Z-octadecenoyl)-N-(acetyl)-sphing-4-enine. The enzyme catalyses an N-acylethanolamine + a 1,2-diacyl-sn-glycero-3-phosphocholine = 2-(acylamino)ethyl fatty acid + a 2-acyl-sn-glycero-3-phosphocholine. The catalysed reaction is an N-acylethanolamine + a 1,2-diacyl-sn-glycero-3-phosphocholine = 2-(acylamino)ethyl fatty acid + a 1-acyl-sn-glycero-3-phosphocholine. It catalyses the reaction N-(5Z,8Z,11Z,14Z-eicosatetraenoyl)-ethanolamine + 1,2-di-(9Z-octadecenoyl)-sn-glycero-3-phosphocholine = 2-[(5Z,8Z,11Z,14Z)-eicosatetraenoylamino]ethyl (9Z)-octadecenoate + (9Z-octadecenoyl)-sn-glycero-3-phosphocholine. It carries out the reaction N-(9Z-octadecenoyl) ethanolamine + 1,2-di-(9Z-octadecenoyl)-sn-glycero-3-phosphocholine = 2-[(9Z)-octadecenoylamino]ethyl (9Z)-octadecenoate + (9Z-octadecenoyl)-sn-glycero-3-phosphocholine. The enzyme catalyses a 3-acyl-sn-glycerol + a 1,2-diacyl-sn-glycero-3-phosphocholine = a 1,3-diacylglycerol + a 1-acyl-sn-glycero-3-phosphocholine. The catalysed reaction is a 3-acyl-sn-glycerol + a 1,2-diacyl-sn-glycero-3-phosphocholine = a 1,3-diacylglycerol + a 2-acyl-sn-glycero-3-phosphocholine. It catalyses the reaction 3-(9Z-octadecenoyl)-sn-glycerol + 1,2-di-(9Z-octadecenoyl)-sn-glycero-3-phosphocholine = 1,3-di-(9Z-octadecenoyl)-glycerol + (9Z-octadecenoyl)-sn-glycero-3-phosphocholine. It carries out the reaction 3-hexadecanoyl-sn-glycerol + 1,2-di-(9Z-octadecenoyl)-sn-glycero-3-phosphocholine = 1-(9Z)-octadecenoyl-3-hexadecanoyl-sn-glycerol + (9Z-octadecenoyl)-sn-glycero-3-phosphocholine. The enzyme catalyses a 1-acyl-sn-glycerol + a 1,2-diacyl-sn-glycero-3-phosphocholine = a 1,3-diacylglycerol + a 2-acyl-sn-glycero-3-phosphocholine. The catalysed reaction is a 1-acyl-sn-glycerol + a 1,2-diacyl-sn-glycero-3-phosphocholine = a 1,3-diacylglycerol + a 1-acyl-sn-glycero-3-phosphocholine. It catalyses the reaction 1-(9Z-octadecenoyl)-sn-glycerol + 1,2-di-(9Z-octadecenoyl)-sn-glycero-3-phosphocholine = 1,3-di-(9Z-octadecenoyl)-glycerol + (9Z-octadecenoyl)-sn-glycero-3-phosphocholine. It carries out the reaction 1-hexadecanoyl-sn-glycerol + 1,2-di-(9Z-octadecenoyl)-sn-glycero-3-phosphocholine = 1-hexadecanoyl-3-(9Z)-octadecenoyl-sn-glycerol + (9Z-octadecenoyl)-sn-glycero-3-phosphocholine. The enzyme catalyses a 2-acylglycerol + a 1,2-diacyl-sn-glycero-3-phosphocholine = a 1,2-diacylglycerol + a 2-acyl-sn-glycero-3-phosphocholine. The catalysed reaction is a 2-acylglycerol + a 1,2-diacyl-sn-glycero-3-phosphocholine = a 1,2-diacylglycerol + a 1-acyl-sn-glycero-3-phosphocholine. It catalyses the reaction 2-hexadecanoylglycerol + 1,2-di-(9Z-octadecenoyl)-sn-glycero-3-phosphocholine = 1-(9Z)-octadecenoyl-2-hexadecanoylglycerol + (9Z-octadecenoyl)-sn-glycero-3-phosphocholine. It carries out the reaction 1-O-alkylglycerol + a 1,2-diacyl-sn-glycero-3-phosphocholine = 1-O-alkyl-3-acylglycerol + a 1-acyl-sn-glycero-3-phosphocholine. The enzyme catalyses 1-O-alkylglycerol + a 1,2-diacyl-sn-glycero-3-phosphocholine = 1-O-alkyl-3-acylglycerol + a 2-acyl-sn-glycero-3-phosphocholine. The catalysed reaction is 1-O-hexadecylglycerol + 1,2-di-(9Z-octadecenoyl)-sn-glycero-3-phosphocholine = 1-O-hexadecyl-3-(9Z)-octadecenoylglycerol + (9Z-octadecenoyl)-sn-glycero-3-phosphocholine. It catalyses the reaction 1-O-alkyl-2-acyl-sn-glycerol + a 1,2-diacyl-sn-glycero-3-phosphocholine = 1-O-alkyl-2,3-diacyl-sn-glycerol + a 2-acyl-sn-glycero-3-phosphocholine. It carries out the reaction 1-O-alkyl-2-acyl-sn-glycerol + a 1,2-diacyl-sn-glycero-3-phosphocholine = 1-O-alkyl-2,3-diacyl-sn-glycerol + a 1-acyl-sn-glycero-3-phosphocholine. The enzyme catalyses 1-O-hexadecyl-2-acetyl-sn-glycerol + 1,2-di-(9Z-octadecenoyl)-sn-glycero-3-phosphocholine = 1-O-hexadecyl-2-acetyl-3-(9Z)-octadecenoyl-sn-glycerol + (9Z-octadecenoyl)-sn-glycero-3-phosphocholine. The catalysed reaction is 1-O-hexadecyl-2-O-methyl-sn-glycerol + 1,2-di-(9Z-octadecenoyl)-sn-glycero-3-phosphocholine = 1-O-hexadecyl-2-O-methyl-3-(9Z)-octadecenoyl-sn-glycerol + (9Z-octadecenoyl)-sn-glycero-3-phosphocholine. It catalyses the reaction a 1,2-diacyl-sn-glycero-3-phosphoethanolamine + H2O = a 1-acyl-sn-glycero-3-phosphoethanolamine + a fatty acid + H(+). It carries out the reaction 1-acyl-2-(5Z,8Z,11Z,14Z)-eicosatetraenoyl-sn-glycero-3-phosphoethanolamine + H2O = a 1-acyl-sn-glycero-3-phosphoethanolamine + (5Z,8Z,11Z,14Z)-eicosatetraenoate + H(+). The enzyme catalyses a 1,2-diacyl-sn-glycero-3-phospho-(1'-sn-glycerol) + H2O = 1-acyl-sn-glycero-3-phospho-(1'-sn-glycerol) + a fatty acid + H(+). The catalysed reaction is 1-hexadecanoyl-2-(9Z-octadecenoyl)-sn-glycero-3-phospho-(1'-sn-glycerol) + H2O = 1-hexadecanoyl-sn-glycero-3-phospho-(1'-sn-glycerol) + (9Z)-octadecenoate + H(+). It catalyses the reaction a 1,2-diacyl-sn-glycero-3-phospho-(1'-sn-glycerol) + H2O = 2-acyl-sn-glycero-3-phospho-(1'-sn-glycerol) + a fatty acid + H(+). It carries out the reaction 1-hexadecanoyl-2-(9Z-octadecenoyl)-sn-glycero-3-phospho-(1'-sn-glycerol) + H2O = 2-(9Z-octadecenoyl)-sn-glycero-3-phospho-(1'-sn-glycerol) + hexadecanoate + H(+). With respect to regulation, inhibited by zinc ions at neutral pH. Zinc ions in plasma may keep the enzyme from hydrolyzing inappropriate substrates. Functionally, has dual calcium-independent phospholipase and O-acyltransferase activities with a potential role in glycerophospholipid homeostasis and remodeling of acyl groups of lipophilic alcohols present in acidic cellular compartments. Catalyzes hydrolysis of the ester bond of the fatty acyl group attached at sn-1 or sn-2 position of phospholipids (phospholipase A1 or A2 activity) and transfer it to the hydroxyl group at the first carbon of lipophilic alcohols (O-acyltransferase activity). Among preferred fatty acyl donors are phosphatidylcholines, phosphatidylethanolamines, phosphatidylglycerols and phosphatidylserines. Favors sn-2 over sn-1 deacylation of unsaturated fatty acyl groups of phosphatidylcholines, phosphatidylethanolamines, and phosphatidylglycerols. Among preferred fatty acyl acceptors are natural lipophilic alcohols including short-chain ceramide N-acetyl-sphingosine (C2 ceramide), alkylacylglycerols, monoacylglycerols, and acylethanolamides such as anandamide and oleoylethanolamide. Selectively hydrolyzes the sn-1 fatty acyl group of truncated oxidized phospholipids and may play a role in detoxification of reactive oxidized phospholipids during oxidative stress. Required for normal phospholipid degradation in alveolar macrophages with potential implications in the clearance of pulmonary surfactant, which is mainly composed of dipalmitoylphosphatidylcholine (1,2-dihexadecanoyl-sn-glycero-3-phosphocholine). Involved in the first step of bis(monoacylglycero)phosphate (BMP) de novo synthesis from phosphatidylglycerol (1,2-diacyl-sn-glycero-3-phospho-(1'-sn-glycerol), PG). BMP is an important player in cargo sorting and degradation, regulation of cellular cholesterol levels and intercellular communication. At neutral pH, hydrolyzes the sn-1 fatty acyl group of the lysophosphatidylcholines. The polypeptide is Lysosomal phospholipase A and acyltransferase (Homo sapiens (Human)).